Reading from the N-terminus, the 322-residue chain is Sulfate adenylyltransferase subunit 2 (322 aa).

Belongs to the PAPS reductase family. CysD subfamily. Heterodimer composed of CysD, the smaller subunit, and CysN.

The enzyme catalyses sulfate + ATP + H(+) = adenosine 5'-phosphosulfate + diphosphate. The protein operates within sulfur metabolism; hydrogen sulfide biosynthesis; sulfite from sulfate: step 1/3. Functionally, with CysN forms the ATP sulfurylase (ATPS) that catalyzes the adenylation of sulfate producing adenosine 5'-phosphosulfate (APS) and diphosphate, the first enzymatic step in sulfur assimilation pathway. APS synthesis involves the formation of a high-energy phosphoric-sulfuric acid anhydride bond driven by GTP hydrolysis by CysN coupled to ATP hydrolysis by CysD. The protein is Sulfate adenylyltransferase subunit 2 of Bradyrhizobium sp. (strain BTAi1 / ATCC BAA-1182).